The following is a 567-amino-acid chain: 2-succinyl-5-enolpyruvyl-6-hydroxy-3-cyclohexene-1-carboxylate synthase (567 aa).

This sequence belongs to the TPP enzyme family. MenD subfamily. Homodimer. Mg(2+) serves as cofactor. It depends on Mn(2+) as a cofactor. Thiamine diphosphate is required as a cofactor.

The enzyme catalyses isochorismate + 2-oxoglutarate + H(+) = 5-enolpyruvoyl-6-hydroxy-2-succinyl-cyclohex-3-ene-1-carboxylate + CO2. It functions in the pathway quinol/quinone metabolism; 1,4-dihydroxy-2-naphthoate biosynthesis; 1,4-dihydroxy-2-naphthoate from chorismate: step 2/7. The protein operates within quinol/quinone metabolism; menaquinone biosynthesis. Catalyzes the thiamine diphosphate-dependent decarboxylation of 2-oxoglutarate and the subsequent addition of the resulting succinic semialdehyde-thiamine pyrophosphate anion to isochorismate to yield 2-succinyl-5-enolpyruvyl-6-hydroxy-3-cyclohexene-1-carboxylate (SEPHCHC). The chain is 2-succinyl-5-enolpyruvyl-6-hydroxy-3-cyclohexene-1-carboxylate synthase from Yersinia pseudotuberculosis serotype IB (strain PB1/+).